A 363-amino-acid chain; its full sequence is Peptide chain release factor 2 (363 aa).

Gln-251 is modified (N5-methylglutamine).

Belongs to the prokaryotic/mitochondrial release factor family. Methylated by PrmC. Methylation increases the termination efficiency of RF2.

The protein resides in the cytoplasm. In terms of biological role, peptide chain release factor 2 directs the termination of translation in response to the peptide chain termination codons UGA and UAA. In Helicobacter pylori (strain Shi470), this protein is Peptide chain release factor 2.